The primary structure comprises 150 residues: Arginine repressor (150 aa).

The protein belongs to the ArgR family.

Its subcellular location is the cytoplasm. Its pathway is amino-acid biosynthesis; L-arginine biosynthesis [regulation]. Functionally, regulates arginine biosynthesis genes. The polypeptide is Arginine repressor (Halothermothrix orenii (strain H 168 / OCM 544 / DSM 9562)).